The primary structure comprises 1040 residues: Chromatin modification-related protein rik1 (1040 aa).

The protein belongs to the DDB1 family. In terms of assembly, component of the Clr4 methyltransferase complex (ClrC) composed of at least clr4, rik1, pcu4, rbx1, raf1 and raf2. The cullin pcu4, rik1, raf1, raf2 and the ring-box protein rbx1 are components of an E3 ubiquitin ligase, whose activity is essential for heterochromatin assembly.

The protein localises to the nucleus. Its subcellular location is the cytoplasm. It is found in the cytoskeleton. It localises to the microtubule organizing center. The protein resides in the spindle pole body. The protein localises to the chromosome. Its function is as follows. Component of the Clr4 methyltransferase complex (ClrC) which contributes to the establishment of heterochromatin by specifically methylating histone H3 to form H3K9me. ClrC preferentially ubiquitylates H3K14 and ClrC-mediated H3 ubiquitination promotes clr4 methyltransferase activity for the methylation of H3K9. H3K9me represents a specific tag for epigenetic transcriptional repression by recruiting swi6/HP1 to methylated histones which leads to transcriptional silencing within centromeric heterochromatin, telomeric regions and at the silent mating-type loci. Rik1 is involved in the RNAi-mediated targeting of ClrC to heterochromatic repeat elements. Rik1 also has a function in meiotic telomere clustering. The polypeptide is Chromatin modification-related protein rik1 (rik1) (Schizosaccharomyces pombe (strain 972 / ATCC 24843) (Fission yeast)).